A 293-amino-acid chain; its full sequence is Phosphatidylcholine-sterol acyltransferase (293 aa).

An N-linked (GlcNAc...) asparagine glycan is attached at N26. S123 functions as the Nucleophile in the catalytic mechanism. N-linked (GlcNAc...) asparagine glycosylation is present at N179. A disulfide bond links C220 and C263. D252 functions as the Charge relay system in the catalytic mechanism. Residue N280 is glycosylated (N-linked (GlcNAc...) asparagine). H284 functions as the Charge relay system in the catalytic mechanism.

The protein belongs to the AB hydrolase superfamily. Lipase family.

Its subcellular location is the secreted. It catalyses the reaction a sterol + a 1,2-diacyl-sn-glycero-3-phosphocholine = a sterol ester + a 1-acyl-sn-glycero-3-phosphocholine. Its activity is regulated as follows. APOA1 is the most potent activator in plasma. Also activated by APOE, APOC1 and APOA4. Functionally, central enzyme in the extracellular metabolism of plasma lipoproteins. Synthesized mainly in the liver and secreted into plasma where it converts cholesterol and phosphatidylcholines (lecithins) to cholesteryl esters and lysophosphatidylcholines on the surface of high and low density lipoproteins (HDLs and LDLs). The cholesterol ester is then transported back to the liver. Has a preference for plasma 16:0-18:2 or 18:O-18:2 phosphatidylcholines. Also produced in the brain by primary astrocytes, and esterifies free cholesterol on nascent APOE-containing lipoproteins secreted from glia and influences cerebral spinal fluid (CSF) APOE- and APOA1 levels. Together with APOE and the cholesterol transporter ABCA1, plays a key role in the maturation of glial-derived, nascent lipoproteins. Required for remodeling high-density lipoprotein particles into their spherical forms. This chain is Phosphatidylcholine-sterol acyltransferase (LCAT), found in Gerbilliscus gambianus (Gambian gerbil).